Consider the following 389-residue polypeptide: MTGPLGAGPQALPAAPLEDWLRERYFQAKTDISSSGVHNYTFGELRALDPALLGTRELDQLMFRDGPSLGDERLRAAVAARVRPGPGHVVMTTHGSSEALYLAFAALVRPGDEVVVATPAYHSLSGLATAAGASLRPWPLRPENGFAPDLDDLRAVLSDRTRLVVVNFPHNPSGACVDPRGRTELLDLVANSQAVLLWDGAFTDLVHDHPPLAEPSQDLDRVLSFGTLSKAYGLPGLRVGWCVVPQDLVSELVRIRDYLTLSLSPLVERVAAVAVEHADALITPRLTEARHNRRRVLEWAAASEGAIDCPVPRGGVTAFPRFTAHTDVTDLCERLLARHGVLVVPGRVFGQADRMRIGFSCPRPELERGLAAISEELGTHARGRRRGTG.

At Lys-230 the chain carries N6-(pyridoxal phosphate)lysine.

This sequence belongs to the class-II pyridoxal-phosphate-dependent aminotransferase family. Requires pyridoxal 5'-phosphate as cofactor.

The enzyme catalyses (2S,3S)-hydroxyarginine = (2S,3R)-capreomycidine + H2O. The protein operates within antibiotic biosynthesis. Involved in the biosynthesis of capreomycidine, an unusual amino acid used by non-ribosomal peptide synthases (NRPS) to make the tuberactinomycin class of peptide antibiotic such as viomycin and capreomycin. Catalyzes the dehydration of the C3 hydroxyl of (3S)-hydroxy-(2S)-arginine and the intramolecular cyclization to yield (2S,3R)-capreomycidine. The polypeptide is Capreomycidine synthase (Streptomyces vinaceus).